An 882-amino-acid chain; its full sequence is Ubiquitin carboxyl-terminal hydrolase 4 (882 aa).

The Rhodanese domain occupies 182–308 (YDSSLLLIDV…WVSKKGACET (127 aa)). Low complexity predominate over residues 382–399 (KAKSSSTSSVTSSSPAPS). The disordered stretch occupies residues 382–411 (KAKSSSTSSVTSSSPAPSQLVRPQTSSMPP). Residues 402 to 411 (VRPQTSSMPP) are compositionally biased toward polar residues. Residues 519–879 (VGLENMGNSC…NAYVLFYHRV (361 aa)) enclose the USP domain. Cysteine 528 (nucleophile) is an active-site residue. Histidine 836 acts as the Proton acceptor in catalysis.

It belongs to the peptidase C19 family.

Its subcellular location is the cytoplasm. The protein resides in the late endosome membrane. It carries out the reaction Thiol-dependent hydrolysis of ester, thioester, amide, peptide and isopeptide bonds formed by the C-terminal Gly of ubiquitin (a 76-residue protein attached to proteins as an intracellular targeting signal).. With respect to regulation, RFU1 is an inhibitor of deubiquitination activity. Ubiquitin thioesterase that acts at the late endosome/prevacuolar compartment to recover ubiquitin from ubiquitinated membrane proteins en route to the vacuole. Also removes ubiquitin from soluble proteins targeted to proteasomes. Is essential to maintain a normal level of free ubiquitin. Required for promoting coordination of DNA replication and avoids DNA overreplication. The sequence is that of Ubiquitin carboxyl-terminal hydrolase 4 (DOA4) from Vanderwaltozyma polyspora (strain ATCC 22028 / DSM 70294 / BCRC 21397 / CBS 2163 / NBRC 10782 / NRRL Y-8283 / UCD 57-17) (Kluyveromyces polysporus).